The chain runs to 465 residues: tRNA modification GTPase MnmE (465 aa).

Positions 21, 85, and 124 each coordinate (6S)-5-formyl-5,6,7,8-tetrahydrofolate. Residues 220 to 387 (GVPVAIIGET…LQQRLVAAAH (168 aa)) form the TrmE-type G domain. N230 contacts K(+). GTP-binding positions include 230–235 (NAGKST), 249–255 (SDIHGTT), and 274–277 (DTAG). S234 provides a ligand contact to Mg(2+). Residues S249, I251, and T254 each contribute to the K(+) site. T255 contacts Mg(2+). Residue K465 coordinates (6S)-5-formyl-5,6,7,8-tetrahydrofolate.

The protein belongs to the TRAFAC class TrmE-Era-EngA-EngB-Septin-like GTPase superfamily. TrmE GTPase family. As to quaternary structure, homodimer. Heterotetramer of two MnmE and two MnmG subunits. K(+) serves as cofactor.

Its subcellular location is the cytoplasm. Functionally, exhibits a very high intrinsic GTPase hydrolysis rate. Involved in the addition of a carboxymethylaminomethyl (cmnm) group at the wobble position (U34) of certain tRNAs, forming tRNA-cmnm(5)s(2)U34. The polypeptide is tRNA modification GTPase MnmE (Bacteroides fragilis (strain YCH46)).